The sequence spans 258 residues: Imidazole glycerol phosphate synthase subunit HisF (258 aa).

Catalysis depends on residues Asp-11 and Asp-130.

Belongs to the HisA/HisF family. In terms of assembly, heterodimer of HisH and HisF.

It is found in the cytoplasm. The catalysed reaction is 5-[(5-phospho-1-deoxy-D-ribulos-1-ylimino)methylamino]-1-(5-phospho-beta-D-ribosyl)imidazole-4-carboxamide + L-glutamine = D-erythro-1-(imidazol-4-yl)glycerol 3-phosphate + 5-amino-1-(5-phospho-beta-D-ribosyl)imidazole-4-carboxamide + L-glutamate + H(+). It functions in the pathway amino-acid biosynthesis; L-histidine biosynthesis; L-histidine from 5-phospho-alpha-D-ribose 1-diphosphate: step 5/9. IGPS catalyzes the conversion of PRFAR and glutamine to IGP, AICAR and glutamate. The HisF subunit catalyzes the cyclization activity that produces IGP and AICAR from PRFAR using the ammonia provided by the HisH subunit. This is Imidazole glycerol phosphate synthase subunit HisF from Magnetococcus marinus (strain ATCC BAA-1437 / JCM 17883 / MC-1).